Reading from the N-terminus, the 264-residue chain is Thymidylate synthase (264 aa).

Arginine 21 provides a ligand contact to dUMP. Histidine 51 contributes to the (6R)-5,10-methylene-5,6,7,8-tetrahydrofolate binding site. A dUMP-binding site is contributed by 126–127 (RR). Cysteine 146 serves as the catalytic Nucleophile. Residues 166–169 (RSAD), asparagine 177, and 207–209 (HLY) each bind dUMP. Aspartate 169 is a (6R)-5,10-methylene-5,6,7,8-tetrahydrofolate binding site. A (6R)-5,10-methylene-5,6,7,8-tetrahydrofolate-binding site is contributed by alanine 263.

It belongs to the thymidylate synthase family. Bacterial-type ThyA subfamily. As to quaternary structure, homodimer.

It localises to the cytoplasm. It catalyses the reaction dUMP + (6R)-5,10-methylene-5,6,7,8-tetrahydrofolate = 7,8-dihydrofolate + dTMP. It participates in pyrimidine metabolism; dTTP biosynthesis. In terms of biological role, catalyzes the reductive methylation of 2'-deoxyuridine-5'-monophosphate (dUMP) to 2'-deoxythymidine-5'-monophosphate (dTMP) while utilizing 5,10-methylenetetrahydrofolate (mTHF) as the methyl donor and reductant in the reaction, yielding dihydrofolate (DHF) as a by-product. This enzymatic reaction provides an intracellular de novo source of dTMP, an essential precursor for DNA biosynthesis. This chain is Thymidylate synthase, found in Rhodopirellula baltica (strain DSM 10527 / NCIMB 13988 / SH1).